Consider the following 315-residue polypeptide: Neuroguidin (315 aa).

Ala-2 carries the N-acetylalanine modification. A coiled-coil region spans residues 7–41 (LESDVSSSITLLKNLQEQVMAVTAQIQALTTKVRA). A necessary for interaction with EIF4E region spans residues 41-174 (AGTYSTEKGL…KGSAKKYVPP (134 aa)). Phosphoserine is present on residues Ser-121, Ser-142, and Ser-143. The tract at residues 123-190 (SENDPLRFKP…YDETEAEREQ (68 aa)) is disordered. The segment covering 144–155 (EDEEESEAEEGQ) has biased composition (acidic residues). Over residues 180 to 190 (HYDETEAEREQ) the composition is skewed to basic and acidic residues. Residues 181–203 (YDETEAEREQKRLEKAKRRALSS) are a coiled coil. 2 positions are modified to phosphoserine: Ser-204 and Ser-214. 2 stretches are compositionally biased toward basic and acidic residues: residues 212–225 (QYSD…DARH) and 232–241 (SQEDQHRVNY). Disordered regions lie at residues 212 to 243 (QYSD…NYEE) and 284 to 315 (GTAH…RRRW). Residues 295–315 (VKKRKKLPKKGRKKKGFRRRW) are compositionally biased toward basic residues.

Belongs to the SAS10 family. In terms of assembly, interacts with CPEB1 and EIF4E. As to expression, expressed in testis, ovary, spleen, kidney, hippocampus and cerebellum (at protein level). Expressed in testis, ovary, spleen, kidney, brain.

Its subcellular location is the nucleus. It localises to the nucleolus. The protein localises to the chromosome. The protein resides in the centromere. It is found in the cytoplasm. Its subcellular location is the cell projection. It localises to the axon. The protein localises to the dendrite. The protein resides in the filopodium. Functionally, part of the small subunit (SSU) processome, first precursor of the small eukaryotic ribosomal subunit. During the assembly of the SSU processome in the nucleolus, many ribosome biogenesis factors, an RNA chaperone and ribosomal proteins associate with the nascent pre-rRNA and work in concert to generate RNA folding, modifications, rearrangements and cleavage as well as targeted degradation of pre-ribosomal RNA by the RNA exosome. Its dissociation from the complex determines the transition from state pre-A1 to state pre-A1*. Inhibits mRNA translation in a cytoplasmic polyadenylation element (CPE)-dependent manner. This chain is Neuroguidin (Ngdn), found in Mus musculus (Mouse).